The primary structure comprises 284 residues: 2-dehydro-3-deoxyphosphooctonate aldolase (284 aa).

The protein belongs to the KdsA family.

Its subcellular location is the cytoplasm. The catalysed reaction is D-arabinose 5-phosphate + phosphoenolpyruvate + H2O = 3-deoxy-alpha-D-manno-2-octulosonate-8-phosphate + phosphate. It participates in carbohydrate biosynthesis; 3-deoxy-D-manno-octulosonate biosynthesis; 3-deoxy-D-manno-octulosonate from D-ribulose 5-phosphate: step 2/3. It functions in the pathway bacterial outer membrane biogenesis; lipopolysaccharide biosynthesis. The sequence is that of 2-dehydro-3-deoxyphosphooctonate aldolase from Glaesserella parasuis serovar 5 (strain SH0165) (Haemophilus parasuis).